We begin with the raw amino-acid sequence, 139 residues long: MKFSIAAAVLALASAVVAHPGAGYVSTPEKEANFQQNFQKFVTACGNGNQVSCCNTETKKVGAPLTAGGLIPILDNINLEDFSLLKGCSKVDVAAVIGVQDLLNSNCKTQVSCCKVGDTNQVGLVNANVDLKCAAQNII.

Residues 1-18 (MKFSIAAAVLALASAVVA) form the signal peptide. 4 disulfide bridges follow: cysteine 45–cysteine 113, cysteine 53–cysteine 107, cysteine 54–cysteine 88, and cysteine 114–cysteine 133.

Belongs to the fungal hydrophobin family. As to quaternary structure, self-assembles to form functional amyloid fibrils called rodlets. Self-assembly into fibrillar rodlets occurs spontaneously at hydrophobic:hydrophilic interfaces and the rodlets further associate laterally to form amphipathic monolayers.

It is found in the secreted. The protein resides in the cell wall. Its function is as follows. Aerial growth, conidiation, and dispersal of filamentous fungi in the environment rely upon a capability of their secreting small amphipathic proteins called hydrophobins (HPBs) with low sequence identity. Class I can self-assemble into an outermost layer of rodlet bundles on aerial cell surfaces, conferring cellular hydrophobicity that supports fungal growth, development and dispersal; whereas Class II form highly ordered films at water-air interfaces through intermolecular interactions but contribute nothing to the rodlet structure. HYPA is a class I hydrophobin that contributes to surface hydrophobicity, and prevents recognition by the cellular immune defense system. The chain is Class I hydrophobin A from Arthroderma benhamiae (strain ATCC MYA-4681 / CBS 112371) (Trichophyton mentagrophytes).